Here is a 309-residue protein sequence, read N- to C-terminus: Homoserine O-succinyltransferase (309 aa).

The active-site Acyl-thioester intermediate is the Cys142. Residues Lys163 and Ser192 each coordinate substrate. Catalysis depends on His235, which acts as the Proton acceptor. The active site involves Glu237. A substrate-binding site is contributed by Arg249.

Belongs to the MetA family.

The protein resides in the cytoplasm. The enzyme catalyses L-homoserine + succinyl-CoA = O-succinyl-L-homoserine + CoA. The protein operates within amino-acid biosynthesis; L-methionine biosynthesis via de novo pathway; O-succinyl-L-homoserine from L-homoserine: step 1/1. Functionally, transfers a succinyl group from succinyl-CoA to L-homoserine, forming succinyl-L-homoserine. The chain is Homoserine O-succinyltransferase from Edwardsiella ictaluri (strain 93-146).